Reading from the N-terminus, the 162-residue chain is Putative ureidoglycolate lyase (162 aa).

The protein belongs to the ureidoglycolate lyase family. In terms of assembly, homodimer. The cofactor is Ni(2+).

The enzyme catalyses (S)-ureidoglycolate = urea + glyoxylate. The protein operates within nitrogen metabolism; (S)-allantoin degradation. Its function is as follows. Catalyzes the catabolism of the allantoin degradation intermediate (S)-ureidoglycolate, generating urea and glyoxylate. Involved in the utilization of allantoin as nitrogen source. In Agrobacterium fabrum (strain C58 / ATCC 33970) (Agrobacterium tumefaciens (strain C58)), this protein is Putative ureidoglycolate lyase.